The sequence spans 249 residues: MQPPGPQQPPPPPLFTPNNGDFTFVSSADAEDPSGSITTPDVKLNLGGEFIKESSATTFLRQRGYGWLLEVEDDDPEDNKPLLEELDIDLKDIYYKIRCVLMPMPSLGFNRQVVRDNPDFWGPLAVVLFFSMISLYGQFKVVSWIITIWIFGSLTIFLLARVLGGEVAYGQVLGVIGYSLLPLIVIAPVLLVVGSFEVVSTLIKLFGVFWAAYSAASLLVGEEFKTKKPLLIYPIFLLYIYFLSLYTGV.

Residues 1 to 15 are compositionally biased toward pro residues; sequence MQPPGPQQPPPPPLF. The interval 1–40 is disordered; it reads MQPPGPQQPPPPPLFTPNNGDFTFVSSADAEDPSGSITTP. The Cytoplasmic portion of the chain corresponds to 1 to 116; that stretch reads MQPPGPQQPP…LGFNRQVVRD (116 aa). The segment covering 16–26 has biased composition (polar residues); sequence TPNNGDFTFVS. The helical transmembrane segment at 117 to 137 threads the bilayer; it reads NPDFWGPLAVVLFFSMISLYG. Q138 is a topological domain (lumenal). A helical membrane pass occupies residues 139-159; the sequence is FKVVSWIITIWIFGSLTIFLL. The Cytoplasmic portion of the chain corresponds to 160–171; it reads ARVLGGEVAYGQ. A helical membrane pass occupies residues 172–192; the sequence is VLGVIGYSLLPLIVIAPVLLV. Topologically, residues 193 to 200 are lumenal; the sequence is VGSFEVVS. The chain crosses the membrane as a helical span at residues 201-221; that stretch reads TLIKLFGVFWAAYSAASLLVG. The Cytoplasmic portion of the chain corresponds to 222 to 228; that stretch reads EEFKTKK. The helical transmembrane segment at 229 to 249 threads the bilayer; sequence PLLIYPIFLLYIYFLSLYTGV.

Belongs to the YIP1 family.

The protein resides in the golgi apparatus. It is found in the cis-Golgi network membrane. Functionally, involved in the maintenance of the Golgi structure. The sequence is that of Protein YIPF4 (YIPF4) from Gallus gallus (Chicken).